Consider the following 300-residue polypeptide: uncharacterized protein (300 aa).

The Proton acceptor role is filled by His-274.

Belongs to the AB hydrolase superfamily. As to quaternary structure, monomer.

The catalysed reaction is a carboxylic ester + H2O = an alcohol + a carboxylate + H(+). This is an uncharacterized protein from Bacillus subtilis (strain 168).